A 511-amino-acid polypeptide reads, in one-letter code: Histidine ammonia-lyase (511 aa).

A cross-link (5-imidazolinone (Ala-Gly)) is located at residues 142 to 144 (ASG). 2,3-didehydroalanine (Ser) is present on Ser143.

It belongs to the PAL/histidase family. Contains an active site 4-methylidene-imidazol-5-one (MIO), which is formed autocatalytically by cyclization and dehydration of residues Ala-Ser-Gly.

It localises to the cytoplasm. It carries out the reaction L-histidine = trans-urocanate + NH4(+). It functions in the pathway amino-acid degradation; L-histidine degradation into L-glutamate; N-formimidoyl-L-glutamate from L-histidine: step 1/3. The polypeptide is Histidine ammonia-lyase (Brucella abortus (strain S19)).